We begin with the raw amino-acid sequence, 1140 residues long: Chromosome partition protein Smc (1140 aa).

34–41 contacts ATP; that stretch reads PNGSGKSN. Residues 160-484 adopt a coiled-coil conformation; that stretch reads VDQFDSEIER…EKEASAKIAS (325 aa). The SMC hinge domain occupies 502 to 619; sequence EGVIGLVRDL…VQDIDAGRRL (118 aa). Residues 660-990 are a coiled coil; the sequence is LEGMKIQLSS…MLNEKKREVF (331 aa).

Belongs to the SMC family. Homodimer.

The protein resides in the cytoplasm. Its function is as follows. Required for chromosome condensation and partitioning. This is Chromosome partition protein Smc from Thermoplasma acidophilum (strain ATCC 25905 / DSM 1728 / JCM 9062 / NBRC 15155 / AMRC-C165).